The chain runs to 210 residues: Large ribosomal subunit protein uL4 (210 aa).

Positions M41–K52 are enriched in polar residues. The segment at M41–S80 is disordered. The span at G60–G71 shows a compositional bias: basic residues.

Belongs to the universal ribosomal protein uL4 family. Part of the 50S ribosomal subunit.

One of the primary rRNA binding proteins, this protein initially binds near the 5'-end of the 23S rRNA. It is important during the early stages of 50S assembly. It makes multiple contacts with different domains of the 23S rRNA in the assembled 50S subunit and ribosome. In terms of biological role, forms part of the polypeptide exit tunnel. This Acaryochloris marina (strain MBIC 11017) protein is Large ribosomal subunit protein uL4.